The following is a 1295-amino-acid chain: Phosphoribosylformylglycinamidine synthase (1295 aa).

The tract at residues 305 to 327 (WPGAATGSGGEIRDEGATGRGAK) is disordered. ATP-binding positions include 307–318 (GAATGSGGEIRD), 386–388 (TGY), and Ala678. Residues Asp679, Glu718, Asn722, and Asp884 each contribute to the Mg(2+) site. Ser886 contacts ATP. The Glutamine amidotransferase type-1 domain occupies 1042-1295 (VAVLREQGVN…IFRNARKQLG (254 aa)). Cys1135 serves as the catalytic Nucleophile. Residues His1260 and Glu1262 contribute to the active site.

It in the N-terminal section; belongs to the FGAMS family. In terms of assembly, monomer.

It is found in the cytoplasm. It catalyses the reaction N(2)-formyl-N(1)-(5-phospho-beta-D-ribosyl)glycinamide + L-glutamine + ATP + H2O = 2-formamido-N(1)-(5-O-phospho-beta-D-ribosyl)acetamidine + L-glutamate + ADP + phosphate + H(+). It functions in the pathway purine metabolism; IMP biosynthesis via de novo pathway; 5-amino-1-(5-phospho-D-ribosyl)imidazole from N(2)-formyl-N(1)-(5-phospho-D-ribosyl)glycinamide: step 1/2. Functionally, phosphoribosylformylglycinamidine synthase involved in the purines biosynthetic pathway. Catalyzes the ATP-dependent conversion of formylglycinamide ribonucleotide (FGAR) and glutamine to yield formylglycinamidine ribonucleotide (FGAM) and glutamate. The sequence is that of Phosphoribosylformylglycinamidine synthase from Salmonella paratyphi A (strain ATCC 9150 / SARB42).